Consider the following 138-residue polypeptide: MDRQLIIVIGLPGSGKTHLCREISSLDSSRQIVDDFIGSFYNGNVMNLLTGKCKLCINDPRLCLKNVFKRFIKIFEQDIGQENIYLILFENNPEQCKFNVQNRNDNRKGILEIVDQYSQRYDIATYSKYDYEIRTVFK.

Position 35–42 (35–42) interacts with ATP; that stretch reads DFIGSFYN.

This is an uncharacterized protein from Acanthamoeba polyphaga mimivirus (APMV).